A 151-amino-acid polypeptide reads, in one-letter code: Ubiquitin-conjugating enzyme E2 2 (151 aa).

The 147-residue stretch at 4-150 folds into the UBC core domain; the sequence is AARRRLMRDF…VRETVERSWE (147 aa). Residue C88 is the Glycyl thioester intermediate of the active site.

This sequence belongs to the ubiquitin-conjugating enzyme family.

It localises to the cytoplasm. The protein resides in the nucleus. The enzyme catalyses S-ubiquitinyl-[E1 ubiquitin-activating enzyme]-L-cysteine + [E2 ubiquitin-conjugating enzyme]-L-cysteine = [E1 ubiquitin-activating enzyme]-L-cysteine + S-ubiquitinyl-[E2 ubiquitin-conjugating enzyme]-L-cysteine.. It functions in the pathway protein modification; protein ubiquitination. In terms of biological role, catalyzes the covalent attachment of ubiquitin to other proteins. Plays a role in transcription regulation by catalyzing the monoubiquitination of histone H2B to form H2BK123ub1. H2BK123ub1 gives a specific tag for epigenetic transcriptional activation and is also a prerequisite for H3K4me and H3K79me formation. Also involved in postreplication repair of UV-damaged DNA, in N-end rule-dependent protein degradation and in sporulation. The polypeptide is Ubiquitin-conjugating enzyme E2 2 (UBC2) (Trichoderma harzianum (Hypocrea lixii)).